Here is a 76-residue protein sequence, read N- to C-terminus: Small ribosomal subunit protein bS16 (76 aa).

This sequence belongs to the bacterial ribosomal protein bS16 family.

The chain is Small ribosomal subunit protein bS16 from Helicobacter pylori (strain HPAG1).